A 357-amino-acid polypeptide reads, in one-letter code: Serine proteinase inhibitor 1 (357 aa).

Belongs to the serpin family. Poxviruses subfamily.

It is found in the host cytoplasm. Its function is as follows. Plays a role in mediating viral host range. May act to inhibit a caspase independent form of apoptosis to allow efficient virus replication in infected cells. The polypeptide is Serine proteinase inhibitor 1 (OPG208) (Monkeypox virus).